We begin with the raw amino-acid sequence, 417 residues long: Serine hydroxymethyltransferase (417 aa).

(6S)-5,6,7,8-tetrahydrofolate-binding positions include leucine 121 and 125–127 (GHL). Lysine 229 carries the N6-(pyridoxal phosphate)lysine modification. (6S)-5,6,7,8-tetrahydrofolate is bound at residue 355–357 (SPF).

The protein belongs to the SHMT family. As to quaternary structure, homodimer. It depends on pyridoxal 5'-phosphate as a cofactor.

Its subcellular location is the cytoplasm. It carries out the reaction (6R)-5,10-methylene-5,6,7,8-tetrahydrofolate + glycine + H2O = (6S)-5,6,7,8-tetrahydrofolate + L-serine. It participates in one-carbon metabolism; tetrahydrofolate interconversion. Its pathway is amino-acid biosynthesis; glycine biosynthesis; glycine from L-serine: step 1/1. Its function is as follows. Catalyzes the reversible interconversion of serine and glycine with tetrahydrofolate (THF) serving as the one-carbon carrier. This reaction serves as the major source of one-carbon groups required for the biosynthesis of purines, thymidylate, methionine, and other important biomolecules. Also exhibits THF-independent aldolase activity toward beta-hydroxyamino acids, producing glycine and aldehydes, via a retro-aldol mechanism. In Shewanella baltica (strain OS223), this protein is Serine hydroxymethyltransferase.